The following is a 118-amino-acid chain: Large ribosomal subunit protein bL19 (118 aa).

The protein belongs to the bacterial ribosomal protein bL19 family.

Its function is as follows. This protein is located at the 30S-50S ribosomal subunit interface and may play a role in the structure and function of the aminoacyl-tRNA binding site. The sequence is that of Large ribosomal subunit protein bL19 from Aliarcobacter butzleri (strain RM4018) (Arcobacter butzleri).